The sequence spans 301 residues: Protease HtpX (301 aa).

A run of 2 helical transmembrane segments spans residues 4–24 and 44–64; these read IGLFLLTNLAILVVLGVVLFI and TGLLIIAAVIGFGGSFISLAM. His150 lines the Zn(2+) pocket. Residue Glu151 is part of the active site. His154 lines the Zn(2+) pocket. Helical transmembrane passes span 165-185 and 201-221; these read LIQGVVNTFVVFFSRIIGHFV and FITSIFAQIVLGILASVIVMW. Position 227 (Glu227) interacts with Zn(2+).

The protein belongs to the peptidase M48B family. The cofactor is Zn(2+).

It is found in the cell inner membrane. The polypeptide is Protease HtpX (Alkalilimnicola ehrlichii (strain ATCC BAA-1101 / DSM 17681 / MLHE-1)).